We begin with the raw amino-acid sequence, 651 residues long: MSGKFVRASKYRHVFGQAAKKELQYEKLKVTNNAWDSNLLKTNGKFIAVNWNASGGGAFAVIPIEEVGKAPDQVPLFRGHTAQVLDTDFDPFNDHRIASGSDDSKIGIWDIPENYKFHDHVDEDGEPIDIKPVKFLTGHARKVGHVLYHPVAENVLASSSGDYTVKLWNVETGKDMITLKHPDMVTSMSFSYDGNYLATVARDKKLRVWNIREEKIVSEGPAHTGAKNQRVVWLGNSDRLATTGFSKLSDRQIGIWDAFNIEKGDLGGFYTVDQSSGILMPFYDEGNKILYLVGKGDGNIRYYEFQNDELFELSEFQSTEAQRGFAVAPKRMVNVKENEVLKGFKTVVDQRIEPVSFFVPRRSEEFQEDIYPDAPSNKPALTAEEWFSGKSVEGPILVSMRSIYDGSAPSFHEAKRPQQPTTQETALEEKKEQPKVEKPISESEKEVKQEAPKSPSPLKSASSSSTINHVLKEDNSINKLLKKSSDIDQVNNAEDPSRDTSGWEEADDEPAPIKIETPVTPTETKKDRTPKVEPSKELKPEPVSIATDRKQEQSLPQEEKSSEKTKSPEQEKSATPPSSITAAKTAITASSKEEPSAARTSPKSLGLKKSVEKLSTLVLQLEDVVDKLTKANLDKDERLLKLEQKIGELSK.

WD repeat units lie at residues 79 to 110, 138 to 169, 180 to 210, and 226 to 257; these read GHTAQVLDTDFDPFNDHRIASGSDDSKIGIWD, GHARKVGHVLYHPVAENVLASSSGDYTVKLWN, KHPDMVTSMSFSYDGNYLATVARDKKLRVWN, and AKNQRVVWLGNSDRLATTGFSKLSDRQIGIWD. Positions 408-609 are disordered; it reads APSFHEAKRP…TSPKSLGLKK (202 aa). Residues 427-451 show a composition bias toward basic and acidic residues; the sequence is LEEKKEQPKVEKPISESEKEVKQEA. Ser441, Ser454, and Ser456 each carry phosphoserine. Positions 452-465 are enriched in low complexity; it reads PKSPSPLKSASSSS. 2 positions are modified to phosphothreonine: Thr517 and Thr529. Composition is skewed to basic and acidic residues over residues 523 to 540 and 547 to 572; these read ETKKDRTPKVEPSKELKP and TDRKQEQSLPQEEKSSEKTKSPEQEK. 2 positions are modified to phosphoserine: Ser573 and Ser579. Low complexity predominate over residues 578–590; it reads SSITAAKTAITAS. Positions 618–650 form a coiled coil; that stretch reads VLQLEDVVDKLTKANLDKDERLLKLEQKIGELS.

It belongs to the WD repeat coronin family. As to quaternary structure, binds to F-actin.

The polypeptide is Coronin-like protein (CRN1) (Saccharomyces cerevisiae (strain ATCC 204508 / S288c) (Baker's yeast)).